An 860-amino-acid chain; its full sequence is Alanine--tRNA ligase (860 aa).

Residues His-553, His-557, Cys-655, and His-659 each coordinate Zn(2+).

The protein belongs to the class-II aminoacyl-tRNA synthetase family. Requires Zn(2+) as cofactor.

The protein localises to the cytoplasm. It catalyses the reaction tRNA(Ala) + L-alanine + ATP = L-alanyl-tRNA(Ala) + AMP + diphosphate. Functionally, catalyzes the attachment of alanine to tRNA(Ala) in a two-step reaction: alanine is first activated by ATP to form Ala-AMP and then transferred to the acceptor end of tRNA(Ala). Also edits incorrectly charged Ser-tRNA(Ala) and Gly-tRNA(Ala) via its editing domain. The polypeptide is Alanine--tRNA ligase (Legionella pneumophila (strain Paris)).